Reading from the N-terminus, the 134-residue chain is uncharacterized protein (134 aa).

The first 23 residues, 1–23 (MWHLRCSNWRGSGVFGMCFSLSG), serve as a signal peptide directing secretion. Residue C24 is the site of N-palmitoyl cysteine attachment. C24 is lipidated: S-diacylglycerol cysteine.

Its subcellular location is the cell membrane. This is an uncharacterized protein from Treponema pallidum (strain Nichols).